A 192-amino-acid chain; its full sequence is Phosphoheptose isomerase (192 aa).

Residues 35-192 (LIETLENQGK…CIERHFAHKN (158 aa)) form the SIS domain. 50–52 (NGG) serves as a coordination point for substrate. Zn(2+) is bound by residues His59 and Glu63. Residues Glu63, 92–93 (ND), 118–120 (STS), Ser123, and Gln170 each bind substrate. The Zn(2+) site is built by Gln170 and His178.

This sequence belongs to the SIS family. GmhA subfamily. In terms of assembly, homotetramer. It depends on Zn(2+) as a cofactor.

It localises to the cytoplasm. It carries out the reaction 2 D-sedoheptulose 7-phosphate = D-glycero-alpha-D-manno-heptose 7-phosphate + D-glycero-beta-D-manno-heptose 7-phosphate. It functions in the pathway carbohydrate biosynthesis; D-glycero-D-manno-heptose 7-phosphate biosynthesis; D-glycero-alpha-D-manno-heptose 7-phosphate and D-glycero-beta-D-manno-heptose 7-phosphate from sedoheptulose 7-phosphate: step 1/1. Its function is as follows. Catalyzes the isomerization of sedoheptulose 7-phosphate in D-glycero-D-manno-heptose 7-phosphate. In Helicobacter pylori (strain HPAG1), this protein is Phosphoheptose isomerase.